A 570-amino-acid polypeptide reads, in one-letter code: Glycine--tRNA ligase (570 aa).

Substrate contacts are provided by Arg95 and Glu159. ATP contacts are provided by residues 191–193, 201–206, 312–313, and 426–429; these read RNE, IRLREF, EV, and GLDR. Residue 206–210 coordinates substrate; sequence FNQAE. 422 to 426 serves as a coordination point for substrate; that stretch reads EPSFG.

This sequence belongs to the class-II aminoacyl-tRNA synthetase family.

The protein localises to the cytoplasm. It carries out the reaction tRNA(Gly) + glycine + ATP = glycyl-tRNA(Gly) + AMP + diphosphate. Functionally, catalyzes the attachment of glycine to tRNA(Gly). The protein is Glycine--tRNA ligase of Archaeoglobus fulgidus (strain ATCC 49558 / DSM 4304 / JCM 9628 / NBRC 100126 / VC-16).